The primary structure comprises 382 residues: UDP-4-amino-4-deoxy-L-arabinose--oxoglutarate aminotransferase (382 aa).

Lys183 is subject to N6-(pyridoxal phosphate)lysine.

The protein belongs to the DegT/DnrJ/EryC1 family. ArnB subfamily. As to quaternary structure, homodimer. Pyridoxal 5'-phosphate serves as cofactor.

The catalysed reaction is UDP-4-amino-4-deoxy-beta-L-arabinose + 2-oxoglutarate = UDP-beta-L-threo-pentopyranos-4-ulose + L-glutamate. It participates in nucleotide-sugar biosynthesis; UDP-4-deoxy-4-formamido-beta-L-arabinose biosynthesis; UDP-4-deoxy-4-formamido-beta-L-arabinose from UDP-alpha-D-glucuronate: step 2/3. It functions in the pathway bacterial outer membrane biogenesis; lipopolysaccharide biosynthesis. Catalyzes the conversion of UDP-4-keto-arabinose (UDP-Ara4O) to UDP-4-amino-4-deoxy-L-arabinose (UDP-L-Ara4N). The modified arabinose is attached to lipid A and is required for resistance to polymyxin and cationic antimicrobial peptides. This is UDP-4-amino-4-deoxy-L-arabinose--oxoglutarate aminotransferase from Pseudomonas fluorescens (strain Pf0-1).